A 133-amino-acid polypeptide reads, in one-letter code: Ribosome-binding factor A (133 aa).

It belongs to the RbfA family. As to quaternary structure, monomer. Binds 30S ribosomal subunits, but not 50S ribosomal subunits or 70S ribosomes.

It localises to the cytoplasm. In terms of biological role, one of several proteins that assist in the late maturation steps of the functional core of the 30S ribosomal subunit. Associates with free 30S ribosomal subunits (but not with 30S subunits that are part of 70S ribosomes or polysomes). Required for efficient processing of 16S rRNA. May interact with the 5'-terminal helix region of 16S rRNA. The polypeptide is Ribosome-binding factor A (Acinetobacter baumannii (strain AB307-0294)).